The primary structure comprises 276 residues: Undecaprenyl-diphosphatase (276 aa).

A run of 8 helical transmembrane segments spans residues 1-21 (MSWL…FLPV), 39-59 (AGAS…LVYF), 84-104 (YRLG…GLLL), 115-135 (LWAI…AEYF), 159-179 (LALL…LFLG), 190-210 (FLLA…DAFA), 222-242 (QLLV…AWFL), and 253-273 (FVGY…TGVV).

It belongs to the UppP family.

It localises to the cell membrane. It carries out the reaction di-trans,octa-cis-undecaprenyl diphosphate + H2O = di-trans,octa-cis-undecaprenyl phosphate + phosphate + H(+). Functionally, catalyzes the dephosphorylation of undecaprenyl diphosphate (UPP). Confers resistance to bacitracin. The protein is Undecaprenyl-diphosphatase of Mycobacterium sp. (strain KMS).